The following is a 522-amino-acid chain: MALLSQAGGSYTVVPSGVCSKAGTKAVVSGGVRNLDVLRMKEAFGSSYSRSLSTKSMLLHSVKRSKRGHQLIVAASPPTEEAVVATEPLTREDLIAYLASGCKTKDKYRIGTEHEKFGFEVNTLRPMKYDQIAELLNGIAERFEWEKVMEGDKIIGLKQGKQSISLEPGGQFELSGAPLETLHQTCAEVNSHLYQVKAVAEEMGIGFLGIGFQPKWRREDIPIMPKGRYDIMRNYMPKVGTLGLDMMLRTCTVQVNLDFSSEADMIRKFRAGLALQPIATALFANSPFTEGKPNGFLSMRSHIWTDTDKDRTGMLPFVFDDSFGFEQYVDYALDVPMYFAYRKNKYIDCTGMTFRQFLAGKLPCLPGELPSYNDWENHLTTIFPEVRLKRYLEMRGADGGPWRRLCALPAFWVGLLYDDDSLQAILDLTADWTPAEREMLRNKVPVTGLKTPFRDGLLKHVAEDVLKLAKDGLERRGYKEAGFLNAVDEVVRTGVTPAEKLLEMYNGEWGQSVDPVFEELLY.

Disulfide bonds link Cys186–Cys406 and Cys349–Cys364.

Belongs to the carboxylate-amine ligase family. Glutamate--cysteine ligase type 2 subfamily. Homodimer or monomer when oxidized or reduced, respectively. Post-translationally, the Cys-186-Cys-406 disulfide bridge is known to modulate the enzyme activity according to the redox status. The oxidized form constitutes the active enzyme. Abundant in leaves and roots. Expressed to a high level in leaf trichomes of mature plant.

It localises to the plastid. The protein resides in the chloroplast. It catalyses the reaction L-cysteine + L-glutamate + ATP = gamma-L-glutamyl-L-cysteine + ADP + phosphate + H(+). Its pathway is sulfur metabolism; glutathione biosynthesis; glutathione from L-cysteine and L-glutamate: step 1/2. With respect to regulation, feedback inhibition by glutathione. Inhibited by buthionine sulfoximine and cystamine. Seems to play an important role in controlling the expression of resistance responses like the regulation of salicylic acid (SA) and phytoalexin (camalexin) production. Involved in resistance to fungal and bacterial pathogens. Required for the regulation of cell proliferation in root apical meristems through the GSH-dependent developmental pathway. Also participates in the detoxification process, the antioxidant response and is essential for embryo development and proper seed maturation. In Arabidopsis thaliana (Mouse-ear cress), this protein is Glutamate--cysteine ligase, chloroplastic (GSH1).